The following is a 156-amino-acid chain: C-type lectin lectoxin-Phi2 (156 aa).

Positions 1–23 (MGRFIFVSLGLLVLAFSLSGIGA) are cleaved as a signal peptide. Disulfide bonds link Cys-27–Cys-38, Cys-55–Cys-154, and Cys-129–Cys-146. Residues 34 to 155 (HNVSCYKLIN…CNRRHRFLCK (122 aa)) enclose the C-type lectin domain. Residues Asn-35 and Asn-109 are each glycosylated (N-linked (GlcNAc...) asparagine). Positions 119–121 (EPN) match the Mannose-binding motif. Ca(2+) is bound by residues Glu-127, Asn-142, and Asp-143.

It belongs to the true venom lectin family. As to expression, expressed by the venom gland.

The protein localises to the secreted. Mannose-binding lectin which recognizes specific carbohydrate structures and agglutinates a variety of animal cells by binding to cell-surface glycoproteins and glycolipids. May be a calcium-dependent lectin. The sequence is that of C-type lectin lectoxin-Phi2 from Philodryas olfersii (Green snake).